The sequence spans 517 residues: Ribonuclease Y (517 aa).

A helical membrane pass occupies residues 3–23 (AILYVIVAVIALILGGAAGVA). In terms of domain architecture, KH spans 207–292 (TVTVVSLPND…EMVEKAQKEV (86 aa)). One can recognise an HD domain in the interval 333–426 (VLKHSIEVAH…VAAADAISAA (94 aa)).

This sequence belongs to the RNase Y family.

Its subcellular location is the cell membrane. Functionally, endoribonuclease that initiates mRNA decay. This is Ribonuclease Y from Symbiobacterium thermophilum (strain DSM 24528 / JCM 14929 / IAM 14863 / T).